Here is a 1522-residue protein sequence, read N- to C-terminus: ATP-binding cassette sub-family C member 3 (1522 aa).

Over Met1–Phe32 the chain is Extracellular. N-linked (GlcNAc...) asparagine glycosylation is present at Asn18. A helical membrane pass occupies residues Gln33–Leu53. Residues Phe54–Lys73 lie on the Cytoplasmic side of the membrane. Residues Thr74 to Gly94 form a helical membrane-spanning segment. Residues Leu95–Ser99 are Extracellular-facing. A helical membrane pass occupies residues Ser100–Thr120. Residues Leu121–Arg132 lie on the Cytoplasmic side of the membrane. A helical membrane pass occupies residues Ser133–Arg153. Topologically, residues Ser154–Phe171 are extracellular. Residues Thr172–Glu192 traverse the membrane as a helical segment. Topologically, residues Lys193 to Ala301 are cytoplasmic. The helical transmembrane segment at Leu302–Leu322 threads the bilayer. An ABC transmembrane type-1 1 domain is found at Leu310–Gln592. The Extracellular segment spans residues Ser323 to Gly347. Residues Phe348 to His368 traverse the membrane as a helical segment. Topologically, residues Tyr369–Phe424 are cytoplasmic. A helical transmembrane segment spans residues Ile425–Ile445. At Leu446–Pro448 the chain is on the extracellular side. The helical transmembrane segment at Ser449–Met469 threads the bilayer. Topologically, residues Lys470–Ala531 are cytoplasmic. A helical membrane pass occupies residues Ile532–Tyr552. Topologically, residues Val553–Asn574 are extracellular. A helical transmembrane segment spans residues Ile575–Val595. Residues Ser596–Ala958 are Cytoplasmic-facing. The ABC transporter 1 domain maps to Ile625–Asn849. An ATP-binding site is contributed by Gly659–Ser666. Residues Ser902 and Ser905 each carry the phosphoserine modification. A helical transmembrane segment spans residues Lys959 to Val979. One can recognise an ABC transmembrane type-1 2 domain in the interval Thr966–Ser1247. Over Ala980–Leu1016 the chain is Extracellular. N-linked (GlcNAc...) asparagine glycosylation is found at Asn1001 and Asn1002. The chain crosses the membrane as a helical span at residues Gln1017–Arg1037. The Cytoplasmic portion of the chain corresponds to Leu1038–Pro1080. Residues Thr1081–Ala1101 form a helical membrane-spanning segment. A topological domain (extracellular) is located at residue Ser1102. A helical transmembrane segment spans residues Thr1103–Phe1123. The Cytoplasmic portion of the chain corresponds to Tyr1124–Val1194. The helical transmembrane segment at Glu1195–Ser1215 threads the bilayer. Residues Leu1216–Asn1217 are Extracellular-facing. The helical transmembrane segment at Pro1218 to Met1238 threads the bilayer. Topologically, residues Ile1239 to Ala1522 are cytoplasmic. In terms of domain architecture, ABC transporter 2 spans Phe1286 to Asp1518. Gly1318–Ser1325 contacts ATP.

This sequence belongs to the ABC transporter superfamily. ABCC family. Conjugate transporter (TC 3.A.1.208) subfamily. As to expression, expressed in lung, ileum, colon and liver. Higher in liver of Eisai hyperbilirubinemic rats.

The protein resides in the basolateral cell membrane. The protein localises to the basal cell membrane. The catalysed reaction is an S-substituted glutathione(in) + ATP + H2O = an S-substituted glutathione(out) + ADP + phosphate + H(+). The enzyme catalyses ATP + H2O + xenobioticSide 1 = ADP + phosphate + xenobioticSide 2.. It carries out the reaction taurocholate(in) + ATP + H2O = taurocholate(out) + ADP + phosphate + H(+). It catalyses the reaction glycocholate(in) + ATP + H2O = glycocholate(out) + ADP + phosphate + H(+). The catalysed reaction is taurolithocholate 3-sulfate(in) + ATP + H2O = taurolithocholate 3-sulfate(out) + ADP + phosphate + H(+). The enzyme catalyses 17beta-estradiol 17-O-(beta-D-glucuronate)(in) + ATP + H2O = 17beta-estradiol 17-O-(beta-D-glucuronate)(out) + ADP + phosphate + H(+). It carries out the reaction dehydroepiandrosterone 3-sulfate(in) + ATP + H2O = dehydroepiandrosterone 3-sulfate(out) + ADP + phosphate + H(+). It catalyses the reaction leukotriene C4(in) + ATP + H2O = leukotriene C4(out) + ADP + phosphate + H(+). The catalysed reaction is (4Z,15Z)-bilirubin IXalpha C8-beta-D-glucuronoside(in) + ATP + H2O = (4Z,15Z)-bilirubin IXalpha C8-beta-D-glucuronoside(out) + ADP + phosphate + H(+). The enzyme catalyses (4Z,15Z)-bilirubin IXalpha C8,C12-beta-D-bisglucuronoside(in) + ATP + H2O = (4Z,15Z)-bilirubin IXalpha C8,C12-beta-D-bisglucuronoside(out) + ADP + phosphate + H(+). It carries out the reaction taurochenodeoxycholate 3-sulfate(in) + ATP + H2O = taurochenodeoxycholate 3-sulfate(out) + ADP + phosphate + H(+). Functionally, ATP-dependent transporter of the ATP-binding cassette (ABC) family that binds and hydrolyzes ATP to enable active transport of various substrates including many drugs, toxicants and endogenous compound across cell membranes. Transports glucuronide conjugates such as bilirubin diglucuronide, estradiol-17-beta-o-glucuronide and GSH conjugates such as leukotriene C4 (LTC4). Transports also various bile salts (taurocholate, glycocholate, taurochenodeoxycholate-3-sulfate, taurolithocholate- 3-sulfate). Does not contribute substantially to bile salt physiology but provides an alternative route for the export of bile acids and glucuronides from cholestatic hepatocytes. May contribute to regulate the transport of organic compounds in testes across the blood-testis-barrier. The protein is ATP-binding cassette sub-family C member 3 (Abcc3) of Rattus norvegicus (Rat).